A 398-amino-acid polypeptide reads, in one-letter code: Succinate--CoA ligase [ADP-forming] subunit beta (398 aa).

The ATP-grasp domain maps to 9–237; that stretch reads RDLFETHGVP…AGGLDILELK (229 aa). ATP-binding positions include Lys-45, 52–54, Ala-94, and Glu-99; that span reads GRG. Mg(2+)-binding residues include Asn-191 and Asp-205. Substrate is bound by residues Asn-257 and 319 to 321; that span reads GIT.

The protein belongs to the succinate/malate CoA ligase beta subunit family. As to quaternary structure, heterotetramer of two alpha and two beta subunits. Mg(2+) serves as cofactor.

It catalyses the reaction succinate + ATP + CoA = succinyl-CoA + ADP + phosphate. The catalysed reaction is GTP + succinate + CoA = succinyl-CoA + GDP + phosphate. Its pathway is carbohydrate metabolism; tricarboxylic acid cycle; succinate from succinyl-CoA (ligase route): step 1/1. Succinyl-CoA synthetase functions in the citric acid cycle (TCA), coupling the hydrolysis of succinyl-CoA to the synthesis of either ATP or GTP and thus represents the only step of substrate-level phosphorylation in the TCA. The beta subunit provides nucleotide specificity of the enzyme and binds the substrate succinate, while the binding sites for coenzyme A and phosphate are found in the alpha subunit. The polypeptide is Succinate--CoA ligase [ADP-forming] subunit beta (Corynebacterium glutamicum (strain ATCC 13032 / DSM 20300 / JCM 1318 / BCRC 11384 / CCUG 27702 / LMG 3730 / NBRC 12168 / NCIMB 10025 / NRRL B-2784 / 534)).